A 474-amino-acid chain; its full sequence is Ribosomal protein uS12 methylthiotransferase RimO (474 aa).

Positions Asn37–Pro147 constitute an MTTase N-terminal domain. [4Fe-4S] cluster-binding residues include Cys46, Cys82, Cys111, Cys179, Cys183, and Cys186. The region spanning Leu165–Glu402 is the Radical SAM core domain. A TRAM domain is found at Ala405–Ala471.

This sequence belongs to the methylthiotransferase family. RimO subfamily. It depends on [4Fe-4S] cluster as a cofactor.

The protein resides in the cytoplasm. It carries out the reaction L-aspartate(89)-[ribosomal protein uS12]-hydrogen + (sulfur carrier)-SH + AH2 + 2 S-adenosyl-L-methionine = 3-methylsulfanyl-L-aspartate(89)-[ribosomal protein uS12]-hydrogen + (sulfur carrier)-H + 5'-deoxyadenosine + L-methionine + A + S-adenosyl-L-homocysteine + 2 H(+). Catalyzes the methylthiolation of an aspartic acid residue of ribosomal protein uS12. This is Ribosomal protein uS12 methylthiotransferase RimO from Shewanella amazonensis (strain ATCC BAA-1098 / SB2B).